Reading from the N-terminus, the 251-residue chain is Octanoyltransferase (251 aa).

The BPL/LPL catalytic domain occupies 29–251; the sequence is AATPNSLWIC…GQKLSSYLAP (223 aa). 68–75 contributes to the substrate binding site; the sequence is RGGQVTYH. Residues 137–174 are disordered; the sequence is ARLRPSPQPSPKGRGSSTPVLLPPLPGEGGGGGGPDPD. Substrate contacts are provided by residues 184-186 and 197-199; these read ALG and GVA. Cysteine 215 functions as the Acyl-thioester intermediate in the catalytic mechanism.

It belongs to the LipB family.

Its subcellular location is the cytoplasm. The enzyme catalyses octanoyl-[ACP] + L-lysyl-[protein] = N(6)-octanoyl-L-lysyl-[protein] + holo-[ACP] + H(+). Its pathway is protein modification; protein lipoylation via endogenous pathway; protein N(6)-(lipoyl)lysine from octanoyl-[acyl-carrier-protein]: step 1/2. Its function is as follows. Catalyzes the transfer of endogenously produced octanoic acid from octanoyl-acyl-carrier-protein onto the lipoyl domains of lipoate-dependent enzymes. Lipoyl-ACP can also act as a substrate although octanoyl-ACP is likely to be the physiological substrate. This Polaromonas sp. (strain JS666 / ATCC BAA-500) protein is Octanoyltransferase.